The primary structure comprises 122 residues: U1 small nuclear ribonucleoprotein C (122 aa).

The segment at 4–36 adopts a Matrin-type zinc-finger fold; that stretch reads YFCDYCDTYLTHDSPSVRKTHCSGRKHKDNVKM.

The protein belongs to the U1 small nuclear ribonucleoprotein C family. U1 snRNP is composed of the 7 core Sm proteins B/B', D1, D2, D3, E, F and G that assemble in a heptameric protein ring on the Sm site of the small nuclear RNA to form the core snRNP, and at least 3 U1 snRNP-specific proteins U1-70K, U1-A and U1-C. U1-C interacts with U1 snRNA and the 5' splice-site region of the pre-mRNA.

The protein localises to the nucleus. In terms of biological role, component of the spliceosomal U1 snRNP, which is essential for recognition of the pre-mRNA 5' splice-site and the subsequent assembly of the spliceosome. U1-C is directly involved in initial 5' splice-site recognition for both constitutive and regulated alternative splicing. The interaction with the 5' splice-site seems to precede base-pairing between the pre-mRNA and the U1 snRNA. Stimulates commitment or early (E) complex formation by stabilizing the base pairing of the 5' end of the U1 snRNA and the 5' splice-site region. The protein is U1 small nuclear ribonucleoprotein C of Ciona intestinalis (Transparent sea squirt).